We begin with the raw amino-acid sequence, 234 residues long: Biosynthetic peptidoglycan transglycosylase (234 aa).

A helical transmembrane segment spans residues 8-28 (VIGCFAAGVVALNLYFFAAIA).

This sequence belongs to the glycosyltransferase 51 family.

The protein resides in the cell inner membrane. It catalyses the reaction [GlcNAc-(1-&gt;4)-Mur2Ac(oyl-L-Ala-gamma-D-Glu-L-Lys-D-Ala-D-Ala)](n)-di-trans,octa-cis-undecaprenyl diphosphate + beta-D-GlcNAc-(1-&gt;4)-Mur2Ac(oyl-L-Ala-gamma-D-Glu-L-Lys-D-Ala-D-Ala)-di-trans,octa-cis-undecaprenyl diphosphate = [GlcNAc-(1-&gt;4)-Mur2Ac(oyl-L-Ala-gamma-D-Glu-L-Lys-D-Ala-D-Ala)](n+1)-di-trans,octa-cis-undecaprenyl diphosphate + di-trans,octa-cis-undecaprenyl diphosphate + H(+). Its pathway is cell wall biogenesis; peptidoglycan biosynthesis. Functionally, peptidoglycan polymerase that catalyzes glycan chain elongation from lipid-linked precursors. This Ralstonia nicotianae (strain ATCC BAA-1114 / GMI1000) (Ralstonia solanacearum) protein is Biosynthetic peptidoglycan transglycosylase.